A 467-amino-acid chain; its full sequence is Mitochondrial distribution and morphology protein 10 (467 aa).

Belongs to the MDM10 family. In terms of assembly, component of the ER-mitochondria encounter structure (ERMES) or MDM complex, composed of MMM1, MDM10, MDM12 and MDM34. Associates with the mitochondrial outer membrane sorting assembly machinery SAM(core) complex.

It is found in the mitochondrion outer membrane. Component of the ERMES/MDM complex, which serves as a molecular tether to connect the endoplasmic reticulum and mitochondria. Components of this complex are involved in the control of mitochondrial shape and protein biogenesis and may function in phospholipid exchange. MDM10 is involved in the late assembly steps of the general translocase of the mitochondrial outer membrane (TOM complex). Functions in the TOM40-specific route of the assembly of outer membrane beta-barrel proteins, including the association of TOM40 with the receptor TOM22 and small TOM proteins. Can associate with the SAM(core) complex as well as the MDM12-MMM1 complex, both involved in late steps of the major beta-barrel assembly pathway, that is responsible for biogenesis of all outer membrane beta-barrel proteins. May act as a switch that shuttles between both complexes and channels precursor proteins into the TOM40-specific pathway. Plays a role in mitochondrial morphology and in the inheritance of mitochondria. The chain is Mitochondrial distribution and morphology protein 10 from Ajellomyces capsulatus (strain G186AR / H82 / ATCC MYA-2454 / RMSCC 2432) (Darling's disease fungus).